The primary structure comprises 366 residues: Flagellar P-ring protein (366 aa).

The signal sequence occupies residues 1-23 (MRTLKIFALAVSLLSMLAAPVQA).

The protein belongs to the FlgI family. The basal body constitutes a major portion of the flagellar organelle and consists of four rings (L,P,S, and M) mounted on a central rod.

The protein localises to the periplasm. It is found in the bacterial flagellum basal body. Functionally, assembles around the rod to form the L-ring and probably protects the motor/basal body from shearing forces during rotation. The sequence is that of Flagellar P-ring protein from Idiomarina loihiensis (strain ATCC BAA-735 / DSM 15497 / L2-TR).